A 130-amino-acid chain; its full sequence is Large ribosomal subunit protein bL12 (130 aa).

Belongs to the bacterial ribosomal protein bL12 family. In terms of assembly, homodimer. Part of the ribosomal stalk of the 50S ribosomal subunit. Forms a multimeric L10(L12)X complex, where L10 forms an elongated spine to which 2 to 4 L12 dimers bind in a sequential fashion. Binds GTP-bound translation factors.

Functionally, forms part of the ribosomal stalk which helps the ribosome interact with GTP-bound translation factors. Is thus essential for accurate translation. In Prochlorococcus marinus (strain SARG / CCMP1375 / SS120), this protein is Large ribosomal subunit protein bL12.